The primary structure comprises 426 residues: Protein prenyltransferase alpha subunit repeat-containing protein 1 (426 aa).

PFTA repeat units lie at residues 86 to 119 (ALVD…VLNP), 121 to 154 (KDLY…QKEC), 180 to 213 (EEMR…AKGN), and 219 to 252 (DELS…AKEL). The disordered stretch occupies residues 255–279 (AAEKDVHTSQQPNGENTATASDDNH). Residues 262–275 (TSQQPNGENTATAS) are compositionally biased toward polar residues. One copy of the PFTA 5 repeat lies at 290 to 323 (EEIQLCTDLIESYPGHETLWCHRRHVFYLWHQWR).

This sequence belongs to the protein prenyltransferase subunit alpha family.

This is Protein prenyltransferase alpha subunit repeat-containing protein 1 (ptar1) from Danio rerio (Zebrafish).